Here is a 468-residue protein sequence, read N- to C-terminus: 3-isopropylmalate dehydratase large subunit (468 aa).

3 residues coordinate [4Fe-4S] cluster: Cys349, Cys409, and Cys412.

This sequence belongs to the aconitase/IPM isomerase family. LeuC type 1 subfamily. In terms of assembly, heterodimer of LeuC and LeuD. The cofactor is [4Fe-4S] cluster.

The enzyme catalyses (2R,3S)-3-isopropylmalate = (2S)-2-isopropylmalate. It functions in the pathway amino-acid biosynthesis; L-leucine biosynthesis; L-leucine from 3-methyl-2-oxobutanoate: step 2/4. Its function is as follows. Catalyzes the isomerization between 2-isopropylmalate and 3-isopropylmalate, via the formation of 2-isopropylmaleate. The sequence is that of 3-isopropylmalate dehydratase large subunit from Shewanella baltica (strain OS223).